We begin with the raw amino-acid sequence, 195 residues long: Imidazoleglycerol-phosphate dehydratase (195 aa).

It belongs to the imidazoleglycerol-phosphate dehydratase family.

The protein localises to the cytoplasm. It catalyses the reaction D-erythro-1-(imidazol-4-yl)glycerol 3-phosphate = 3-(imidazol-4-yl)-2-oxopropyl phosphate + H2O. It participates in amino-acid biosynthesis; L-histidine biosynthesis; L-histidine from 5-phospho-alpha-D-ribose 1-diphosphate: step 6/9. The chain is Imidazoleglycerol-phosphate dehydratase from Polynucleobacter asymbioticus (strain DSM 18221 / CIP 109841 / QLW-P1DMWA-1) (Polynucleobacter necessarius subsp. asymbioticus).